The chain runs to 276 residues: Glutamate racemase (276 aa).

Substrate is bound by residues 10-11 and 42-43; these read DS and YG. Residue cysteine 73 is the Proton donor/acceptor of the active site. 74–75 is a substrate binding site; the sequence is NS. The active-site Proton donor/acceptor is the cysteine 183. Residue 184-185 participates in substrate binding; the sequence is TH.

Belongs to the aspartate/glutamate racemases family.

It carries out the reaction L-glutamate = D-glutamate. It functions in the pathway cell wall biogenesis; peptidoglycan biosynthesis. Its function is as follows. Provides the (R)-glutamate required for cell wall biosynthesis. The protein is Glutamate racemase of Parafrankia sp. (strain EAN1pec).